The sequence spans 545 residues: 2-succinyl-5-enolpyruvyl-6-hydroxy-3-cyclohexene-1-carboxylate synthase (545 aa).

Positions 184-209 (PLVPDPEPHGAPTPAGRPGGRPWTYT) are disordered. The segment covering 195 to 205 (PTPAGRPGGRP) has biased composition (low complexity).

This sequence belongs to the TPP enzyme family. MenD subfamily. In terms of assembly, homodimer. Requires Mg(2+) as cofactor. Mn(2+) serves as cofactor. The cofactor is thiamine diphosphate.

The enzyme catalyses isochorismate + 2-oxoglutarate + H(+) = 5-enolpyruvoyl-6-hydroxy-2-succinyl-cyclohex-3-ene-1-carboxylate + CO2. It functions in the pathway quinol/quinone metabolism; 1,4-dihydroxy-2-naphthoate biosynthesis; 1,4-dihydroxy-2-naphthoate from chorismate: step 2/7. It participates in quinol/quinone metabolism; menaquinone biosynthesis. Functionally, catalyzes the thiamine diphosphate-dependent decarboxylation of 2-oxoglutarate and the subsequent addition of the resulting succinic semialdehyde-thiamine pyrophosphate anion to isochorismate to yield 2-succinyl-5-enolpyruvyl-6-hydroxy-3-cyclohexene-1-carboxylate (SEPHCHC). In Mycobacterium avium (strain 104), this protein is 2-succinyl-5-enolpyruvyl-6-hydroxy-3-cyclohexene-1-carboxylate synthase.